The following is a 379-amino-acid chain: DNA replication and repair protein RecF (379 aa).

Position 30–37 (30–37 (GDNAQGKS)) interacts with ATP.

It belongs to the RecF family.

Its subcellular location is the cytoplasm. In terms of biological role, the RecF protein is involved in DNA metabolism; it is required for DNA replication and normal SOS inducibility. RecF binds preferentially to single-stranded, linear DNA. It also seems to bind ATP. This chain is DNA replication and repair protein RecF, found in Thermosynechococcus vestitus (strain NIES-2133 / IAM M-273 / BP-1).